A 258-amino-acid polypeptide reads, in one-letter code: Imidazole glycerol phosphate synthase subunit HisF (258 aa).

Catalysis depends on residues aspartate 11 and aspartate 130.

This sequence belongs to the HisA/HisF family. In terms of assembly, heterodimer of HisH and HisF.

It is found in the cytoplasm. The catalysed reaction is 5-[(5-phospho-1-deoxy-D-ribulos-1-ylimino)methylamino]-1-(5-phospho-beta-D-ribosyl)imidazole-4-carboxamide + L-glutamine = D-erythro-1-(imidazol-4-yl)glycerol 3-phosphate + 5-amino-1-(5-phospho-beta-D-ribosyl)imidazole-4-carboxamide + L-glutamate + H(+). It participates in amino-acid biosynthesis; L-histidine biosynthesis; L-histidine from 5-phospho-alpha-D-ribose 1-diphosphate: step 5/9. In terms of biological role, IGPS catalyzes the conversion of PRFAR and glutamine to IGP, AICAR and glutamate. The HisF subunit catalyzes the cyclization activity that produces IGP and AICAR from PRFAR using the ammonia provided by the HisH subunit. The sequence is that of Imidazole glycerol phosphate synthase subunit HisF from Rhodospirillum centenum (strain ATCC 51521 / SW).